The chain runs to 369 residues: MAPISIRGVKKNYGKTPVVHGVDLDIQSGEFIVILGPSGCGKSTLLRMIAGLEEITGGEIAIDGRVVNQLEPRERGCAMVFQNYALYPHMSVAENIGYALKVAGVSKAERQRRIGEVAKALSLEPFLERRPAALSGGQRQRVAMGRAMIREPKVFLFDEPLSNLDAKLRIAMRAEIRRLHRRLGATSIFVTHDQTEAMTLADRLVVMNGGRVEQVGTPEEVYHHPVSRFVAGFVGTPAMNLLEGTINDEGVFVYDQSRKVALPRERAAPLKGKRVVLGMRAEAARLVAPDAPGALTATADFIEELGASRIVHADFDGLPFAVALTEAVKVKSGDPIGIAIDYDQIHLYAADTGRIIENPVMNNAGAVHA.

The ABC transporter domain maps to 4 to 234; sequence ISIRGVKKNY…PVSRFVAGFV (231 aa). 36–43 contributes to the ATP binding site; sequence GPSGCGKS.

Belongs to the ABC transporter superfamily. sn-glycerol-3-phosphate importer (TC 3.A.1.1.3) family. In terms of assembly, the complex is composed of two ATP-binding proteins (UgpC), two transmembrane proteins (UgpA and UgpE) and a solute-binding protein (UgpB).

The protein resides in the cell inner membrane. The catalysed reaction is sn-glycerol 3-phosphate(out) + ATP + H2O = sn-glycerol 3-phosphate(in) + ADP + phosphate + H(+). In terms of biological role, part of the ABC transporter complex UgpBAEC involved in sn-glycerol-3-phosphate (G3P) import. Responsible for energy coupling to the transport system. This chain is sn-glycerol-3-phosphate import ATP-binding protein UgpC 1, found in Rhizobium johnstonii (strain DSM 114642 / LMG 32736 / 3841) (Rhizobium leguminosarum bv. viciae).